The following is a 377-amino-acid chain: Uroporphyrinogen decarboxylase (377 aa).

Substrate contacts are provided by residues 40–44 (RQAGR), Asp-89, Tyr-169, Ser-224, and His-354.

It belongs to the uroporphyrinogen decarboxylase family. In terms of assembly, homodimer.

It is found in the cytoplasm. The catalysed reaction is uroporphyrinogen III + 4 H(+) = coproporphyrinogen III + 4 CO2. It participates in porphyrin-containing compound metabolism; protoporphyrin-IX biosynthesis; coproporphyrinogen-III from 5-aminolevulinate: step 4/4. Catalyzes the decarboxylation of four acetate groups of uroporphyrinogen-III to yield coproporphyrinogen-III. This chain is Uroporphyrinogen decarboxylase, found in Leifsonia xyli subsp. xyli (strain CTCB07).